The following is a 241-amino-acid chain: Small ribosomal subunit protein uS2 (241 aa).

The protein belongs to the universal ribosomal protein uS2 family.

This is Small ribosomal subunit protein uS2 from Citrobacter koseri (strain ATCC BAA-895 / CDC 4225-83 / SGSC4696).